We begin with the raw amino-acid sequence, 634 residues long: 1-deoxy-D-xylulose-5-phosphate synthase (634 aa).

Thiamine diphosphate is bound by residues His74 and 115-117 (AHS). Mg(2+) is bound at residue Asp146. Thiamine diphosphate contacts are provided by residues 147–148 (GA), Asn176, Tyr283, and Glu365. Asn176 contacts Mg(2+).

Belongs to the transketolase family. DXPS subfamily. Homodimer. The cofactor is Mg(2+). It depends on thiamine diphosphate as a cofactor.

The catalysed reaction is D-glyceraldehyde 3-phosphate + pyruvate + H(+) = 1-deoxy-D-xylulose 5-phosphate + CO2. It participates in metabolic intermediate biosynthesis; 1-deoxy-D-xylulose 5-phosphate biosynthesis; 1-deoxy-D-xylulose 5-phosphate from D-glyceraldehyde 3-phosphate and pyruvate: step 1/1. In terms of biological role, catalyzes the acyloin condensation reaction between C atoms 2 and 3 of pyruvate and glyceraldehyde 3-phosphate to yield 1-deoxy-D-xylulose-5-phosphate (DXP). This is 1-deoxy-D-xylulose-5-phosphate synthase from Burkholderia orbicola (strain MC0-3).